Here is a 325-residue protein sequence, read N- to C-terminus: GPI-linked NAD(P)(+)--arginine ADP-ribosyltransferase 1 (325 aa).

The N-terminal stretch at 1 to 22 (MKIPAMMSLLLVSVGLRDGVQV) is a signal peptide. 2 disulfides stabilise this stretch: Cys-53–Cys-272 and Cys-169–Cys-219. Residue Asn-65 is glycosylated (N-linked (GlcNAc...) asparagine). The region spanning 73–268 (KVYADGWAQA…IYLRALGKRS (196 aa)) is the TR mART core domain. Tyr-117 and Arg-174 together coordinate NAD(+). Residues Arg-174 and Ser-197 contribute to the active site. Residue Ser-228 participates in NAD(+) binding. Residue Glu-235 is part of the active site. An N-linked (GlcNAc...) asparagine glycan is attached at Asn-248. A lipid anchor (GPI-anchor amidated serine) is attached at Ser-290. Residues 291 to 325 (APGSISASCSLLLLLLFLVLSALPENPGLQQLTRC) constitute a propeptide, removed in mature form.

This sequence belongs to the Arg-specific ADP-ribosyltransferase family. Abundantly expressed in cardiac and skeletal muscle. Low levels also found in lung.

Its subcellular location is the sarcoplasmic reticulum membrane. The catalysed reaction is L-arginyl-[protein] + NAD(+) = N(omega)-(ADP-D-ribosyl)-L-arginyl-[protein] + nicotinamide + H(+). Functionally, has ADP-ribosyltransferase activity toward GLP1R. The polypeptide is GPI-linked NAD(P)(+)--arginine ADP-ribosyltransferase 1 (Art1) (Mus musculus (Mouse)).